Here is a 772-residue protein sequence, read N- to C-terminus: A type blood N-acetyl-alpha-D-galactosamine deacetylase (772 aa).

The N-terminal stretch at 1-27 is a signal peptide; sequence MRNRRKAVSLLTGLLVTAQLFPTAALA. Ser-87 and His-123 together coordinate substrate. An a divalent metal cation-binding site is contributed by Asp-126. The deacetylase activity stretch occupies residues 180-402; it reads WSKPTSDAER…WRIGYAENSF (223 aa). Tyr-236 is a binding site for substrate. His-278 is a binding site for a divalent metal cation. Positions 494–605 constitute an F5/8 type C domain; the sequence is SDDLEIAVVE…KDLVASGSDW (112 aa). The segment at 502–765 is CBM32 carbohydrate-binding domain; it reads VENPYTLIPQ…VCVSPVVDFD (264 aa). A not required for activity on soluble substrates region spans residues 515–772; sequence TATATSVYGG…DFDYFSYVGE (258 aa).

The cofactor is a divalent metal cation.

The catalysed reaction is an N-acetyl-alpha-D-galactosaminyl-(1-&gt;3)-[alpha-L-fucosyl-(1-&gt;2)]-beta-D-galactosyl derivative + H2O = an alpha-D-galactosaminyl-(1-&gt;3)-[alpha-L-fucosyl-(1-&gt;2)]-beta-D-galactosyl derivative + acetate. With respect to regulation, inhibited by EDTA. Functionally, one of an enzyme pair that work together to convert the A antigen to the H antigen of the O blood type, which together release galactosamine. Catalyzes the first step in the conversion, generating the substrate for the subsequent enzyme (FpGalNase, AC P0DTR5). Works on many different A antigen subtypes. Glu-90 probably activates a nucleophilic water molecule to start the deacetylation reaction. This is A type blood N-acetyl-alpha-D-galactosamine deacetylase from Flavonifractor plautii (Fusobacterium plautii).